We begin with the raw amino-acid sequence, 45 residues long: uncharacterized protein (45 aa).

A helical membrane pass occupies residues 10–27; the sequence is LLYFVLFVDIYGIFTNNI.

It is found in the membrane. This is an uncharacterized protein from Dictyostelium discoideum (Social amoeba).